Here is a 498-residue protein sequence, read N- to C-terminus: Aminotransferase swnA (498 aa).

This sequence belongs to the class-I pyridoxal-phosphate-dependent aminotransferase family. Pyridoxal 5'-phosphate is required as a cofactor.

Its pathway is mycotoxin biosynthesis. Functionally, aminotransferase; part of the gene cluster that mediates the biosynthesis of swainsonine (SW), a cytotoxic fungal alkaloid and a potential cancer therapy drug. Swainsonine production occurs via a multibranched pathway and is dispensable for fungal colonization of plants and infection of insect hosts. The first step of swainsonine biosynthesis is the production of the precursor pipecolic acid (PA) via conversion of L-lysine (Lys) to 1-piperideine-6-carboxylate (P6C) by the aminotransferase swnA, the latter being further reduced to PA by the reductase swnR. PA can be converted from lysine by both the SW biosynthetic cluster and the unclustered genes such as lysine cyclodeaminase. The PKS-NRPS hybrid synthetase swnK uptakes and condensates PA and malonyl-CoA with and without skipping of the ketoreductase (KR) domain in order to produce 3 intermediates, 1-oxoindolizidine, (1S)-1-hydroxyindolizin, and (1R)-1-hydroxyindolizine; with the transisomer (1S)-1-hydroxyindolizin being predominant. The terminal thioester reductase (TE) domain of swnK is involved in reduction of the thioester bond to release the intermediate aldehydes. The oxidoreductase swnN could contribute to the reduction of 1-oxoindolizidine to (1S)-1-hydroxyindolizin and (1R)-1-hydroxyindolizine, contributing to the major route of SW production. The dioxygenase swnH2 would be responsible for the oxidization of (1R)-1-hydroxyindolizine into (1R,2S)-1,2-dihydroxyindolizine and of (1S)-1-hydroxyindolizin to yield both (1R,2S)-1,2-dihydroxyindolizine and (1S,2S)-1,2-dihydroxyindolizine. The dioxygenase swnH1 then performs the conversion of the 1,2-dihydroxyindolizine epimers to SW. The sequence is that of Aminotransferase swnA from Metarhizium robertsii (strain ARSEF 23 / ATCC MYA-3075) (Metarhizium anisopliae (strain ARSEF 23)).